A 377-amino-acid polypeptide reads, in one-letter code: Probable protein phosphatase 2C 7 (377 aa).

Disordered regions lie at residues 1-68 and 80-99; these read MAAH…GKAA and TTVA…EDDE. The span at 21 to 39 shows a compositional bias: low complexity; the sequence is PPAAEAEAAAAAAAIARAA. Over residues 51-63 the composition is skewed to basic residues; the sequence is GVRHPLKHRRFRA. Low complexity predominate over residues 80-89; the sequence is TTVAEATATG. Positions 115–361 constitute a PPM-type phosphatase domain; sequence SCGYSSFRGR…DNITCIVVKF (247 aa). D151, G152, D313, and D352 together coordinate Mn(2+).

This sequence belongs to the PP2C family. Mg(2+) is required as a cofactor. Requires Mn(2+) as cofactor.

It carries out the reaction O-phospho-L-seryl-[protein] + H2O = L-seryl-[protein] + phosphate. The enzyme catalyses O-phospho-L-threonyl-[protein] + H2O = L-threonyl-[protein] + phosphate. The chain is Probable protein phosphatase 2C 7 from Oryza sativa subsp. japonica (Rice).